Consider the following 74-residue polypeptide: Large ribosomal subunit protein bL31 (74 aa).

4 residues coordinate Zn(2+): cysteine 16, cysteine 18, cysteine 37, and cysteine 40.

The protein belongs to the bacterial ribosomal protein bL31 family. Type A subfamily. Part of the 50S ribosomal subunit. The cofactor is Zn(2+).

In terms of biological role, binds the 23S rRNA. The chain is Large ribosomal subunit protein bL31 from Nitrosomonas europaea (strain ATCC 19718 / CIP 103999 / KCTC 2705 / NBRC 14298).